The primary structure comprises 270 residues: Glutamate racemase (270 aa).

Substrate-binding positions include 15–16 (DS) and 47–48 (YG). The active-site Proton donor/acceptor is Cys-78. A substrate-binding site is contributed by 79-80 (NT). Cys-189 (proton donor/acceptor) is an active-site residue. Position 190-191 (190-191 (TH)) interacts with substrate.

It belongs to the aspartate/glutamate racemases family.

It catalyses the reaction L-glutamate = D-glutamate. It functions in the pathway cell wall biogenesis; peptidoglycan biosynthesis. In terms of biological role, provides the (R)-glutamate required for cell wall biosynthesis. The chain is Glutamate racemase from Syntrophus aciditrophicus (strain SB).